The following is a 265-amino-acid chain: 3-methyl-2-oxobutanoate hydroxymethyltransferase (265 aa).

The Mg(2+) site is built by Asp-45 and Asp-84. 3-methyl-2-oxobutanoate is bound by residues 45–46, Asp-84, and Lys-112; that span reads DS. Residue Glu-114 coordinates Mg(2+). The Proton acceptor role is filled by Glu-181.

Belongs to the PanB family. Homodecamer; pentamer of dimers. Mg(2+) is required as a cofactor.

The protein localises to the cytoplasm. The catalysed reaction is 3-methyl-2-oxobutanoate + (6R)-5,10-methylene-5,6,7,8-tetrahydrofolate + H2O = 2-dehydropantoate + (6S)-5,6,7,8-tetrahydrofolate. The protein operates within cofactor biosynthesis; (R)-pantothenate biosynthesis; (R)-pantoate from 3-methyl-2-oxobutanoate: step 1/2. Functionally, catalyzes the reversible reaction in which hydroxymethyl group from 5,10-methylenetetrahydrofolate is transferred onto alpha-ketoisovalerate to form ketopantoate. This chain is 3-methyl-2-oxobutanoate hydroxymethyltransferase, found in Pseudoalteromonas atlantica (strain T6c / ATCC BAA-1087).